A 397-amino-acid chain; its full sequence is Tryptophan synthase beta chain (397 aa).

Lys91 is modified (N6-(pyridoxal phosphate)lysine).

This sequence belongs to the TrpB family. Tetramer of two alpha and two beta chains. Pyridoxal 5'-phosphate serves as cofactor.

It carries out the reaction (1S,2R)-1-C-(indol-3-yl)glycerol 3-phosphate + L-serine = D-glyceraldehyde 3-phosphate + L-tryptophan + H2O. The protein operates within amino-acid biosynthesis; L-tryptophan biosynthesis; L-tryptophan from chorismate: step 5/5. The beta subunit is responsible for the synthesis of L-tryptophan from indole and L-serine. The chain is Tryptophan synthase beta chain from Bacillus anthracis (strain A0248).